The following is an 863-amino-acid chain: Bifunctional uridylyltransferase/uridylyl-removing enzyme (863 aa).

Positions 1–328 (MLFPLSLSSP…SSNQATVIEQ (328 aa)) are uridylyltransferase. The tract at residues 329 to 687 (LDDDFQLINQ…ISNRFSLGGT (359 aa)) is uridylyl-removing. An HD domain is found at 446–568 (VDEHTLRVML…VQNQVRLDYL (123 aa)). 2 consecutive ACT domains span residues 688–772 (EVFI…PNRQ) and 794–863 (EMEL…RNIG).

This sequence belongs to the GlnD family. The cofactor is Mg(2+).

The catalysed reaction is [protein-PII]-L-tyrosine + UTP = [protein-PII]-uridylyl-L-tyrosine + diphosphate. It catalyses the reaction [protein-PII]-uridylyl-L-tyrosine + H2O = [protein-PII]-L-tyrosine + UMP + H(+). With respect to regulation, uridylyltransferase (UTase) activity is inhibited by glutamine, while glutamine activates uridylyl-removing (UR) activity. Modifies, by uridylylation and deuridylylation, the PII regulatory proteins (GlnB and homologs), in response to the nitrogen status of the cell that GlnD senses through the glutamine level. Under low glutamine levels, catalyzes the conversion of the PII proteins and UTP to PII-UMP and PPi, while under higher glutamine levels, GlnD hydrolyzes PII-UMP to PII and UMP (deuridylylation). Thus, controls uridylylation state and activity of the PII proteins, and plays an important role in the regulation of nitrogen assimilation and metabolism. In Haemophilus influenzae (strain PittEE), this protein is Bifunctional uridylyltransferase/uridylyl-removing enzyme.